The primary structure comprises 261 residues: LIM and SH3 domain protein 1 (261 aa).

Residue Met1 is modified to N-acetylmethionine. The region spanning 5–56 is the LIM zinc-binding domain; the sequence is CARCGKIVYPTEKVNCLDKFWHKACFHCETCKMTLNMKNYKGYEKKPYCNAH. N6-acetyllysine is present on Lys42. Nebulin repeat units lie at residues 61–95 and 97–131; these read SFTMVADTPENLRLKQQSELQSQVRYKEEFEKNKG and GFSVVADTPELQRIKKTQDQISNIKYHEEFEKSRM. Thr68 bears the Phosphothreonine mark. At Lys75 the chain carries N6-methyllysine. Position 99 is a phosphoserine (Ser99). Phosphothreonine is present on Thr104. Residues 111 to 186 are disordered; it reads KKTQDQISNI…QPVAQSYGGY (76 aa). Lys112 is subject to N6-succinyllysine. Ser118 is modified (phosphoserine). Residues 121–130 are compositionally biased toward basic and acidic residues; that stretch reads KYHEEFEKSR. Residues Ser134 and Ser146 each carry the phosphoserine modification. Positions 167–183 are enriched in low complexity; the sequence is SAPVYQQPQQQPVAQSY. The SH3 domain maps to 202-261; sequence GGGKRYRAVYDYSAADEDEVSFQDGDTIVNVQQIDDGWMYGTVERTGDTGMLPANYVEAI.

As to quaternary structure, interacts with F-actin. Interacts with ANKRD54. Interacts with KBTBD10.

It localises to the cytoplasm. The protein resides in the cell cortex. Its subcellular location is the cytoskeleton. Functionally, plays an important role in the regulation of dynamic actin-based, cytoskeletal activities. Agonist-dependent changes in LASP1 phosphorylation may also serve to regulate actin-associated ion transport activities, not only in the parietal cell but also in certain other F-actin-rich secretory epithelial cell types. In Homo sapiens (Human), this protein is LIM and SH3 domain protein 1 (LASP1).